We begin with the raw amino-acid sequence, 271 residues long: MPELPEVEIISNFLFDKIKNKQISGVTVNNWNLRVPITQNIDDVIKGKVINNIKRRGKYIIWHIDNDIVVTVHLGMSGKLIYAKGEQAQNKHDHVIFSFSDNTSIIFNDPRKFGLVIILNKEQEVNFFNDFGIEPFTDEFNGDYLQKLLKSKKVNIKSALMNNKLIVGIGNIYASESLFRARISPLRSAQDLTYKECEKLATEIKNTLSDAIIAGGSTLKDYAQPSGSVGYFQNSFYVYGKVQKPCKICNNTITLIRQNGRSTYFCNACQN.

Catalysis depends on proline 2, which acts as the Schiff-base intermediate with DNA. Glutamate 3 functions as the Proton donor in the catalytic mechanism. Residue lysine 58 is the Proton donor; for beta-elimination activity of the active site. Residues histidine 92, arginine 111, and lysine 152 each contribute to the DNA site. The FPG-type zinc-finger motif lies at 237–271; it reads YVYGKVQKPCKICNNTITLIRQNGRSTYFCNACQN. Arginine 261 serves as the catalytic Proton donor; for delta-elimination activity.

This sequence belongs to the FPG family. Monomer. The cofactor is Zn(2+).

The catalysed reaction is Hydrolysis of DNA containing ring-opened 7-methylguanine residues, releasing 2,6-diamino-4-hydroxy-5-(N-methyl)formamidopyrimidine.. The enzyme catalyses 2'-deoxyribonucleotide-(2'-deoxyribose 5'-phosphate)-2'-deoxyribonucleotide-DNA = a 3'-end 2'-deoxyribonucleotide-(2,3-dehydro-2,3-deoxyribose 5'-phosphate)-DNA + a 5'-end 5'-phospho-2'-deoxyribonucleoside-DNA + H(+). Its function is as follows. Involved in base excision repair of DNA damaged by oxidation or by mutagenic agents. Acts as a DNA glycosylase that recognizes and removes damaged bases. Has a preference for oxidized purines, such as 7,8-dihydro-8-oxoguanine (8-oxoG). Has AP (apurinic/apyrimidinic) lyase activity and introduces nicks in the DNA strand. Cleaves the DNA backbone by beta-delta elimination to generate a single-strand break at the site of the removed base with both 3'- and 5'-phosphates. In Wolbachia sp. subsp. Brugia malayi (strain TRS), this protein is Formamidopyrimidine-DNA glycosylase.